Consider the following 193-residue polypeptide: Potassium-transporting ATPase KdpC subunit (193 aa).

Residues 14 to 34 (ITFTFLVLCGLVYPLIVTGIA) traverse the membrane as a helical segment.

Belongs to the KdpC family. As to quaternary structure, the system is composed of three essential subunits: KdpA, KdpB and KdpC.

It is found in the cell membrane. Its function is as follows. Part of the high-affinity ATP-driven potassium transport (or Kdp) system, which catalyzes the hydrolysis of ATP coupled with the electrogenic transport of potassium into the cytoplasm. This subunit acts as a catalytic chaperone that increases the ATP-binding affinity of the ATP-hydrolyzing subunit KdpB by the formation of a transient KdpB/KdpC/ATP ternary complex. The chain is Potassium-transporting ATPase KdpC subunit from Bacillus cereus (strain ATCC 10987 / NRS 248).